The chain runs to 460 residues: Photosystem II CP43 reaction center protein (460 aa).

The Cytoplasmic portion of the chain corresponds to 1-35; sequence MVTLSNTSMVGGRDLPSTGFAWWSGNARLINLSGK. A helical membrane pass occupies residues 36–58; that stretch reads LLGAHVAHAGLIVFWAGAMTLFE. Residues 59–98 lie on the Lumenal, thylakoid side of the membrane; the sequence is VAHFIPEKPMYEQGLILLPHIATLGWGVGPAGEVTDIFPF. Residues 99–121 form a helical membrane-spanning segment; the sequence is FVVGVLHLISSAVLGLGGIYHAL. Residues 122–142 are Cytoplasmic-facing; that stretch reads RGPEVLEEYSSFFGYDWKDKN. The chain crosses the membrane as a helical span at residues 143-165; that stretch reads QMTNIIGYHLILLGCGALLLVFK. Residues 166-220 are Lumenal, thylakoid-facing; sequence AMFFGGVYDTWAPGGGDVRVITNPTLNPAIIFGYLLKAPFGGEGWIISVNNMEDI. Residues 221-240 traverse the membrane as a helical segment; sequence IGGHIWIGLICISGGIWHIL. The Cytoplasmic portion of the chain corresponds to 241-255; that stretch reads TKPFGWARRALIWSG. Residues 256-276 form a helical membrane-spanning segment; the sequence is EAYLSYSLGALSLMGFIASVF. Residues 277 to 411 lie on the Lumenal, thylakoid side of the membrane; sequence VWFNNTAYPS…NSFNYVSPRA (135 aa). Positions 341 and 344 each coordinate [CaMn4O5] cluster. The helical transmembrane segment at 412 to 436 threads the bilayer; the sequence is WLATSHFVLGFFFLVGHLWHAGRAR. Residues 437–460 lie on the Cytoplasmic side of the membrane; it reads AAAAGFEKGIDRETEPTLFMPDLD.

This sequence belongs to the PsbB/PsbC family. PsbC subfamily. In terms of assembly, PSII is composed of 1 copy each of membrane proteins PsbA, PsbB, PsbC, PsbD, PsbE, PsbF, PsbH, PsbI, PsbJ, PsbK, PsbL, PsbM, PsbT, PsbX, PsbY, PsbZ, Psb30/Ycf12, peripheral proteins PsbO, CyanoQ (PsbQ), PsbU, PsbV and a large number of cofactors. It forms dimeric complexes. Binds multiple chlorophylls and provides some of the ligands for the Ca-4Mn-5O cluster of the oxygen-evolving complex. It may also provide a ligand for a Cl- that is required for oxygen evolution. PSII binds additional chlorophylls, carotenoids and specific lipids. is required as a cofactor.

The protein resides in the cellular thylakoid membrane. Its function is as follows. One of the components of the core complex of photosystem II (PSII). PSII binds chlorophyll and helps catalyze the primary light-induced photochemical processes of PSII. PSII is a light-driven water:plastoquinone oxidoreductase, using light energy to abstract electrons from H(2)O, generating O(2) and a proton gradient subsequently used for ATP formation. Required for correct assembly of PSII. This chain is Photosystem II CP43 reaction center protein, found in Synechocystis sp. (strain ATCC 27184 / PCC 6803 / Kazusa).